We begin with the raw amino-acid sequence, 211 residues long: N-(5'-phosphoribosyl)anthranilate isomerase (211 aa).

The protein belongs to the TrpF family.

It carries out the reaction N-(5-phospho-beta-D-ribosyl)anthranilate = 1-(2-carboxyphenylamino)-1-deoxy-D-ribulose 5-phosphate. Its pathway is amino-acid biosynthesis; L-tryptophan biosynthesis; L-tryptophan from chorismate: step 3/5. This Pseudomonas aeruginosa (strain UCBPP-PA14) protein is N-(5'-phosphoribosyl)anthranilate isomerase.